We begin with the raw amino-acid sequence, 324 residues long: Polyketide biosynthesis acyltransferase homolog PksD (324 aa).

Residue Ser99 is part of the active site.

The protein resides in the cytoplasm. Its pathway is antibiotic biosynthesis; bacillaene biosynthesis. Its function is as follows. Probably involved in some intermediate steps for the synthesis of the antibiotic polyketide bacillaene which is involved in secondary metabolism. This is Polyketide biosynthesis acyltransferase homolog PksD (pksD) from Bacillus subtilis (strain 168).